A 174-amino-acid polypeptide reads, in one-letter code: Thiol-disulfide oxidoreductase ResA (174 aa).

A helical; Signal-anchor for type II membrane protein transmembrane segment spans residues 11–30 (TAILLVLLAAIGYTIYTNFF). Positions 36 to 174 (VAVGSTAPDF…IERHLESIKP (139 aa)) constitute a Thioredoxin domain. Residues Cys74 and Cys77 are joined by a disulfide bond.

It belongs to the thioredoxin family. ResA subfamily.

It localises to the cell membrane. The protein operates within protein modification; cytochrome c assembly. Its function is as follows. Thiol-disulfide oxidoreductase which is required in disulfide reduction during c-type cytochrome synthesis. May accept reducing equivalents from CcdA, leading to breakage of disulfide bonds in apocytochrome c; following this reduction heme can be covalently attached. In Geobacillus kaustophilus (strain HTA426), this protein is Thiol-disulfide oxidoreductase ResA.